A 402-amino-acid chain; its full sequence is MSRVSQARSLGKYFLLVDNMLVVLGFFVVFPLISIRFVDQMGWAALMVGIALGLRQLVQQGLGIFGGAIADRFGAKPMIVTGMLMRAGGFAAMAVAHEPWVLWLSCILSGLGGTLFDPPRAALVVKLVRPHQRGRFFSLLMMQDSAGAVIGALLGSWLLQYDFRLVCSAGAALFIACAAFNAWYLPAWKLSTVKTPVREGLGRVLRDKRFVTYVLTLTGYYMLAVQVMLMLPIMVNDIAGSPAAVKWMYAIEATISLTLLYPIARWSEKRYRLEHRLMAGLLVMTLAMLPIGMTSSLQQLFTLICLFYIGSIIAEPARETLGASLADARARGSYMGFSRLGLAFGGALGYAGGGWLFDAGKAVGQPELPWLMLGAIGFITFLALWWQFSPKRSASGMLEPRT.

The next 11 helical transmembrane spans lie at 13 to 33, 34 to 54, 99 to 116, 139 to 159, 165 to 185, 214 to 234, 243 to 263, 277 to 297, 300 to 320, 340 to 360, and 368 to 388; these read YFLL…FPLI, SIRF…ALGL, PWVL…GTLF, LLMM…SWLL, LVCS…AWYL, VLTL…LPIM, AAVK…LYPI, LMAG…TSSL, LFTL…ARET, LGLA…FDAG, and LPWL…WWQF.

Belongs to the major facilitator superfamily. DHA1 family. MdtH (TC 2.A.1.2.21) subfamily.

The protein resides in the cell inner membrane. This chain is Multidrug resistance protein MdtH, found in Klebsiella pneumoniae (strain 342).